The sequence spans 333 residues: T-cell surface glycoprotein CD1c (333 aa).

An N-terminal signal peptide occupies residues 1–17 (MLFLQFLLLALLLPGGD). Over 18–302 (NADASQEHVS…ILYWGHHFSM (285 aa)) the chain is Extracellular. N-linked (GlcNAc...) asparagine glycosylation is found at asparagine 38, asparagine 70, asparagine 75, and asparagine 146. Disulfide bonds link cysteine 120-cysteine 185 and cysteine 225-cysteine 280. An Ig-like domain is found at 206–296 (PEAWLSSRPS…LGGQDIILYW (91 aa)). Residues 303-323 (NWIALVVIVPLVILIVLVLWF) traverse the membrane as a helical segment. The Cytoplasmic segment spans residues 324 to 333 (KKHCSYQDIL). Residues 329-332 (YQDI) carry the Internalization signal motif.

Heterodimer with B2M (beta-2-microglobulin). As to expression, expressed on cortical thymocytes, on certain T-cell leukemias, and in various other tissues.

Its subcellular location is the cell membrane. It localises to the endosome membrane. The protein resides in the lysosome. Antigen-presenting protein that binds self and non-self lipid and glycolipid antigens and presents them to T-cell receptors on natural killer T-cells. The protein is T-cell surface glycoprotein CD1c (CD1C) of Homo sapiens (Human).